Reading from the N-terminus, the 118-residue chain is Alpha-amylase inhibitor 4 (118 aa).

4 disulfide bridges follow: cysteine 7-cysteine 60, cysteine 21-cysteine 49, cysteine 30-cysteine 82, and cysteine 50-cysteine 101.

The protein belongs to the protease inhibitor I6 (cereal trypsin/alpha-amylase inhibitor) family.

The protein localises to the secreted. In terms of biological role, alpha-amylase inhibitor. The sequence is that of Alpha-amylase inhibitor 4 from Sorghum bicolor (Sorghum).